The chain runs to 280 residues: Probable aquaporin PIP2-8 (280 aa).

Positions 1-21 (MAAGSGSGSNPKDYQDPPPAP) are disordered. 2 helical membrane passes run 36–56 (AAIAEFTATLLLVCISVSTVI) and 70–92 (LGIAWAFGGLIFVLVYCTAGISG). The short motif at 96-98 (NPA) is the NPA 1 element. Helical transmembrane passes span 113–135 (RAALYTMAQCVGAVCGAGLARAM), 156–176 (SAGAGVVAEMVGTFVLVYTVF), and 192–212 (VLAPLPIGLAVLVVHLATIPI). Residues 218–220 (NPA) carry the NPA 2 motif. A helical membrane pass occupies residues 236–256 (AWSHLWIFWVGPFAGAAAAMI).

It belongs to the MIP/aquaporin (TC 1.A.8) family. PIP (TC 1.A.8.11) subfamily. Expressed in leaves and at lower levels in roots.

The protein localises to the cell membrane. Aquaporins facilitate the transport of water and small neutral solutes across cell membranes. The sequence is that of Probable aquaporin PIP2-8 (PIP2-8) from Oryza sativa subsp. japonica (Rice).